The primary structure comprises 377 residues: Methylthioribose-1-phosphate isomerase (377 aa).

Aspartate 254 acts as the Proton donor in catalysis.

This sequence belongs to the eIF-2B alpha/beta/delta subunits family. MtnA subfamily.

It is found in the cytoplasm. The protein resides in the nucleus. The enzyme catalyses 5-(methylsulfanyl)-alpha-D-ribose 1-phosphate = 5-(methylsulfanyl)-D-ribulose 1-phosphate. Its pathway is amino-acid biosynthesis; L-methionine biosynthesis via salvage pathway; L-methionine from S-methyl-5-thio-alpha-D-ribose 1-phosphate: step 1/6. In terms of biological role, catalyzes the interconversion of methylthioribose-1-phosphate (MTR-1-P) into methylthioribulose-1-phosphate (MTRu-1-P). This chain is Methylthioribose-1-phosphate isomerase (mri1), found in Aspergillus terreus (strain NIH 2624 / FGSC A1156).